Reading from the N-terminus, the 398-residue chain is 1-deoxy-D-xylulose 5-phosphate reductoisomerase (398 aa).

Residues threonine 10, glycine 11, serine 12, isoleucine 13, lysine 37, asparagine 38, and asparagine 124 each coordinate NADPH. Lysine 125 contacts 1-deoxy-D-xylulose 5-phosphate. Glutamate 126 is an NADPH binding site. Aspartate 150 serves as a coordination point for Mn(2+). 1-deoxy-D-xylulose 5-phosphate is bound by residues serine 151, glutamate 152, serine 186, and histidine 209. Glutamate 152 provides a ligand contact to Mn(2+). Residue glycine 215 participates in NADPH binding. The 1-deoxy-D-xylulose 5-phosphate site is built by serine 222, asparagine 227, lysine 228, and glutamate 231. Glutamate 231 provides a ligand contact to Mn(2+).

Belongs to the DXR family. As to quaternary structure, homodimer. Mg(2+) is required as a cofactor. Requires Mn(2+) as cofactor.

It carries out the reaction 2-C-methyl-D-erythritol 4-phosphate + NADP(+) = 1-deoxy-D-xylulose 5-phosphate + NADPH + H(+). The protein operates within isoprenoid biosynthesis; isopentenyl diphosphate biosynthesis via DXP pathway; isopentenyl diphosphate from 1-deoxy-D-xylulose 5-phosphate: step 1/6. Catalyzes the NADPH-dependent rearrangement and reduction of 1-deoxy-D-xylulose-5-phosphate (DXP) to 2-C-methyl-D-erythritol 4-phosphate (MEP). The sequence is that of 1-deoxy-D-xylulose 5-phosphate reductoisomerase from Buchnera aphidicola subsp. Schizaphis graminum (strain Sg).